The primary structure comprises 538 residues: MPNSSYYDDDGGSFEAASYPFQFDGSRRFPNDLHPTMFEGEESNQNGGSVLIDQAFQDIQNPNVNSNMHLENQFQHFHEPNKESGAFGSYKNDDVAKEIESSKNQETDAKSEQAPFTEDASSSNYAHHRSADSQTKSALPPNVPASSSPLPPMSIAMNIARKRSWPASLAIERDNTADALFSTEDGREEQFNLEGVKTKSGRKVHRPNHFDPLVKLPTRRRGPGRRPVVALAMKCSVCQRLQSPPKNRIVFCDGCNTPFHQLCHEPYISDELLDSPNGEWFCDDCIRRKKQAPLVTGTTARELNLSSEEKKSYLLSLPISQLVDILLFCEQLHPDIPFYSPKTSTIVQELQSKRSAFTATMNEPVTGDQYLSLNNGTESQSKTTKHSTSLPSTEPVEVDKQYMESEKIPTIDEYLQEYSNEDEIVLQVLESFPAAVSFSTITNTIQAKYSNRKIKNSNITRSLNRLVRKNRVLRDARGSSYELNRTFDADRPSVRPDISITGPIPIDWMLYTPHTEDLTENFCTYYMFDETPIVLSSI.

Disordered regions lie at residues 28–47 (RFPNDLHPTMFEGEESNQNG), 98–150 (EIES…SSPL), and 198–222 (TKSGRKVHRPNHFDPLVKLPTRRRG). Residues 98–111 (EIESSKNQETDAKS) are compositionally biased toward basic and acidic residues. A PHD-type zinc finger spans residues 232–288 (AMKCSVCQRLQSPPKNRIVFCDGCNTPFHQLCHEPYISDELLDSPNGEWFCDDCIRR). The segment covering 367–392 (GDQYLSLNNGTESQSKTTKHSTSLPS) has biased composition (polar residues). Residues 367 to 396 (GDQYLSLNNGTESQSKTTKHSTSLPSTEPV) form a disordered region.

In terms of assembly, component of the SWM histone demethylase complex composed of at least lsd1, lsd2, phf1 and phf2.

It localises to the nucleus. In terms of biological role, component of the SWM histone demethylase complex that specifically demethylates H3K9me2, a specific tag for epigenetic transcriptional activation, thereby acting as a corepressor. Has a role in regulating heterochromatin propagation and euchromatic transcription. The protein is SWM histone demethylase complex subunit phf2 (phf2) of Schizosaccharomyces pombe (strain 972 / ATCC 24843) (Fission yeast).